We begin with the raw amino-acid sequence, 519 residues long: Polyamine aminopropyltransferase (519 aa).

The next 7 helical transmembrane spans lie at 17 to 37 (LLLVSVAICAASGLVYELALV), 53 to 73 (LIVAGYVAALGVGAILVKPFL), 86 to 106 (LLGLIGGLSALVLYMTFAVVG), 109 to 129 (LWMLVLATALIGILVGAELPL), 158 to 178 (LGALLGGLAWPFILLPWLGMM), 180 to 200 (GAAAAGMINLLAALFVGCVLL), and 208 to 228 (QFIRAVVALLVAIAVLGTVLV). The tract at residues 200–463 (LRHLLPRAQF…FQLCGPEGTE (264 aa)) is spermidine synthase. One can recognise a PABS domain in the interval 225 to 459 (TVLVRSDGIV…GDWGFQLCGP (235 aa)). Q255 is an S-methyl-5'-thioadenosine binding site. D307 is a binding site for spermidine. S-methyl-5'-thioadenosine is bound by residues E326 and 358–359 (DA). D379 (proton acceptor) is an active-site residue.

This sequence belongs to the spermidine/spermine synthase family. As to quaternary structure, homodimer or homotetramer.

The protein localises to the cell membrane. The catalysed reaction is S-adenosyl 3-(methylsulfanyl)propylamine + putrescine = S-methyl-5'-thioadenosine + spermidine + H(+). Its pathway is amine and polyamine biosynthesis; spermidine biosynthesis; spermidine from putrescine: step 1/1. Catalyzes the irreversible transfer of a propylamine group from the amino donor S-adenosylmethioninamine (decarboxy-AdoMet) to putrescine (1,4-diaminobutane) to yield spermidine. The chain is Polyamine aminopropyltransferase from Corynebacterium efficiens (strain DSM 44549 / YS-314 / AJ 12310 / JCM 11189 / NBRC 100395).